Here is a 376-residue protein sequence, read N- to C-terminus: Chaperone protein DnaJ (376 aa).

In terms of domain architecture, J spans 5–70 (DYYEILGVSK…QKRAAYDQYG (66 aa)). The CR-type zinc-finger motif lies at 131–209 (GVTKEIRIPT…CHGHGRVERS (79 aa)). 8 residues coordinate Zn(2+): C144, C147, C161, C164, C183, C186, C197, and C200. CXXCXGXG motif repeat units lie at residues 144–151 (CDVCHGSG), 161–168 (CPTCHGSG), 183–190 (CPHCQGRG), and 197–204 (CNKCHGHG).

Belongs to the DnaJ family. Homodimer. Zn(2+) is required as a cofactor.

It is found in the cytoplasm. Functionally, participates actively in the response to hyperosmotic and heat shock by preventing the aggregation of stress-denatured proteins and by disaggregating proteins, also in an autonomous, DnaK-independent fashion. Unfolded proteins bind initially to DnaJ; upon interaction with the DnaJ-bound protein, DnaK hydrolyzes its bound ATP, resulting in the formation of a stable complex. GrpE releases ADP from DnaK; ATP binding to DnaK triggers the release of the substrate protein, thus completing the reaction cycle. Several rounds of ATP-dependent interactions between DnaJ, DnaK and GrpE are required for fully efficient folding. Also involved, together with DnaK and GrpE, in the DNA replication of plasmids through activation of initiation proteins. The sequence is that of Chaperone protein DnaJ from Escherichia coli (strain K12 / DH10B).